The chain runs to 56 residues: Genome polyprotein (56 aa).

The segment at 1–30 is disordered; sequence ETMLDRIASGDLESSVDDPRSAEDKRFESH. Residues 17–30 show a composition bias toward basic and acidic residues; it reads DDPRSAEDKRFESH.

Belongs to the picornaviridae polyprotein family. As to quaternary structure, homopentamer. Homooligomer. In terms of assembly, interacts with capsid protein VP2. Interacts with capsid protein VP3. In terms of processing, specific enzymatic cleavages by viral protease in vivo yield a variety of precursors and mature proteins. Polyprotein processing intermediates are produced, such as P1-2A which is a functional precursor of the structural proteins, VP0 which is a VP4-VP2 precursor, VP1-2A precursor, 3ABC precursor which is a stable and catalytically active precursor of 3A, 3B and 3C proteins, 3AB and 3CD precursors. The assembly signal 2A is removed from VP1-2A by a host protease, possibly host Cathepsin L. This cleavage occurs over a region of 3 amino-acids probably generating VP1 proteins with heterogeneous C-termini. Post-translationally, the assembly signal 2A is removed from VP1-2A by a host protease, possibly host Cathepsin L in naked virions. This cleavage does not occur in enveloped virions. This cleavage occurs over a region of 3 amino-acids probably generating VP1 proteins with heterogeneous C-termini.

The protein resides in the virion. The protein localises to the host endosome. It localises to the host multivesicular body. Its function is as follows. Capsid proteins VP1, VP2, and VP3 form a closed capsid enclosing the viral positive strand RNA genome. All these proteins contain a beta-sheet structure called beta-barrel jelly roll. Together they form an icosahedral capsid (T=3) composed of 60 copies of each VP1, VP2, and VP3, with a diameter of approximately 300 Angstroms. VP1 is situated at the 12 fivefold axes, whereas VP2 and VP3 are located at the quasi-sixfold axes. The naked capsid interacts with the host receptor HAVCR1 to provide virion attachment to and probably entry into the target cell. Precursor component of immature procapsids that corresponds to an extended form of the structural protein VP1. After maturation, possibly by the host Cathepsin L, the assembly signal 2A is cleaved to give rise to the mature VP1 protein. The protein is Genome polyprotein of Callithrix (Owl-faced monkey).